A 244-amino-acid chain; its full sequence is DNA repair protein RecO (244 aa).

This sequence belongs to the RecO family.

Functionally, involved in DNA repair and RecF pathway recombination. The protein is DNA repair protein RecO of Nocardioides sp. (strain ATCC BAA-499 / JS614).